We begin with the raw amino-acid sequence, 297 residues long: Tyrosine recombinase XerD (297 aa).

The Core-binding (CB) domain maps to 1-87 (MLEYAIEDFF…SIRSFHQFLI (87 aa)). The region spanning 108-291 (KLPDILSQDE…TKARLKDMYQ (184 aa)) is the Tyr recombinase domain. Residues Arg-147, Lys-171, His-243, Arg-246, and His-269 contribute to the active site. Residue Tyr-278 is the O-(3'-phospho-DNA)-tyrosine intermediate of the active site.

This sequence belongs to the 'phage' integrase family. XerD subfamily. As to quaternary structure, forms a cyclic heterotetrameric complex composed of two molecules of XerC and two molecules of XerD.

The protein localises to the cytoplasm. Site-specific tyrosine recombinase, which acts by catalyzing the cutting and rejoining of the recombining DNA molecules. The XerC-XerD complex is essential to convert dimers of the bacterial chromosome into monomers to permit their segregation at cell division. It also contributes to the segregational stability of plasmids. This chain is Tyrosine recombinase XerD, found in Oceanobacillus iheyensis (strain DSM 14371 / CIP 107618 / JCM 11309 / KCTC 3954 / HTE831).